Here is a 3033-residue protein sequence, read N- to C-terminus: MSTNPKPQRKTKRNTNRRPEDVKFPGGGQIVGGVYLLPRRGPRLGVRTTRKTSERSQPRGRRQPIPKDRRSTGKAWGKPGRPWPLYGNEGLGWAGWLLSPRGSRPSWGPTDPRHRSRNVGKVIDTLTCGFADLMGYIPVVGAPLSGAARAVAHGVRVLEDGVNYATGNLPGFPFSIFLLALLSCITVPVSAAQVKNTSSSYMVTNDCSNDSITWQLEAAVLHVPGCVPCERVGNTSRCWVPVSPNMAVRQPGALTQGLRTHIDMVVMSATFCSALYVGDLCGGVMLAAQVFIVSPQYHWFVQECNCSIYPGTITGHRMAWDMMMNWSPTATMILAYVMRVPEVIIDIVSGAHWGVMFGLAYFSMQGAWAKVIVILLLAAGVDAGTTTVGGAVARSTNVIAGVFSHGPQQNIQLINTNGSWHINRTALNCNDSLNTGFLAALFYTNRFNSSGCPGRLSACRNIEAFRIGWGTLQYEDNVTNPEDMRPYCWHYPPKPCGVVPARSVCGPVYCFTPSPVVVGTTDRRGVPTYTWGENETDVFLLNSTRPPQGSWFGCTWMNSTGFTKTCGAPPCRTRADFNASTDLLCPTDCFRKHPDATYIKCGSGPWLTPKCLVHYPYRLWHYPCTVNFTIFKIRMYVGGVEHRLTAACNFTRGDRCDLEDRDRSQLSPLLHSTTEWAILPCTYSDLPALSTGLLHLHQNIVDVQYMYGLSPAITKYVVRWEWVVLLFLLLADARVCACLWMLILLGQAEAALEKLVVLHAASAANCHGLLYFAIFFVAAWHIRGRVVPLTTYCLTGLWPFCLLLMALPRQAYAYDAPVHGQIGVGLLILITLFTLTPGYKTLLGQCLWWLCYLLTLGEAMIQEWVPPMQVRGGRDGIAWAVTIFCPGVVFDITKWLLALLGPAYLLRAALTHVPYFVRAHALIRVCALVKQLAGGRYVQVALLALGRWTGTYIYDHLTPMSDWAASGLRDLAVAVEPIIFSPMEKKVIVWGAETAACGDILHGLPVSARLGQEILLGPADGYTSKGWKLLAPITAYAQQTRGLLGAIVVSMTGRDRTEQAGEVQILSTVSQSFLGTTISGVLWTVYHGAGNKTLAGLRGPVTQMYSSAEGDLVGWPSPPGTKSLEPCKCGAVDLYLVTRNADVIPARRRGDKRGALLSPRPISTLKGSSGGPVLCPRGHVVGLFRAAVCSRGVAKSIDFIPVETLDVVTRSPTFSDNSTPPAVPQTYQVGYLHAPTGSGKSTKVPVAYAAQGYKVLVLNPSVAATLGFGAYLSKAHGINPNIRTGVRTVMTGEAITYSTYGKFLADGGCASGAYDIIICDECHAVDATSILGIGTVLDQAETAGVRLTVLATATPPGSVTTPHPDIEEVGLGREGEIPFYGRAIPLSCIKGGRHLIFCHSKKKCDELAAALRGMGLNAVAYYRGLDVSIIPAQGDVVVVATDALMTGYTGDFDSVIDCNVAVTQAVDFSLDPTFTITTQTVPQDAVSRSQRRGRTGRGRQGTYRYVSTGERASGMFDSVVLCECYDAGAAWYDLTPAETTVRLRAYFNTPGLPVCQDHLEFWEAVFTGLTHIDAHFLSQTKQAGENFAYLVAYQATVCARAKAPPPSWDAMWKCLARLKPTLAGPTPLLYRLGPITNEVTLTHPGTKYIATCMQADLEVMTSTWVLAGGVLAAVAAYCLATGCVSIIGRLHVNQRVVVAPDKEVLYEAFDEMEECASRAALIEEGQRIAEMLKSKIQGLLQQASKQAQDIQPAMQASWPKVEQFWARHMWNFISGIQYLAGLSTLPGNPAVASMMAFSAALTSPLSTSTTILLNIMGGWLASQIAPPAGATGFVVSGLVGAAVGSIGLGKVLVDILAGYGAGISGALVAFKIMSGEKPSMEDVINLLPGILSPGALVVGVICAAILRRHVGPGEGAVQWMNRLIAFASRGNHVAPTHYVTESDASQRVTQLLGSLTITSLLRRLHNWITEDCPIPCSGSWLRDVWDWVCTILTDFKNWLTSKLFPKLPGLPFISCQKGYKGVWAGTGIMTTRCPCGANISGNVRLGSMRITGPKTCMNTWQGTFPINCYTEGQCAPKPPTNYKTAIWRVAASEYAEVTQHGSYSYVTGLTTDNLKIPCQLPSPEFFSWVDGVQIHRFAPTPKPFFRDEVSFCVGLNSYAVGSQLPCEPEPDADVLRSMLTDPPHITAETAARRLARGSPPSEASSSVSQLSAPSLRATCTTHSNTYDVDMVDANLLMEGGVAQTEPESRVPVLDFLEPMAEEESDLEPSIPSECMLPRSGFPRALPAWARPDYNPPLVESWRRPDYQPPTVAGCALPPPKKAPTPPPRRRRTVGLSESTISEALQQLAIKTFGQPPSSGDAGSSTGAGAAESGGPTSPGEPAPSETGSASSMPPLEGEPGDPDLESDQVELQPPPQGGGVAPGSGSGSWSTCSEEDDTTVCCSMSYSWTGALITPCSPEEEKLPINPLSNSLLRYHNKVYCTTSKSASQRAKKVTFDRTQVLDAHYDSVLKDIKLAASKVSARLLTLEEACQLTPPHSARSKYGFGAKEVRSLSGRAVNHIKSVWKDLLEDPQTPIPTTIMAKNEVFCVDPAKGGKKPARLIVYPDLGVRVCEKMALYDITQKLPQAVMGASYGFQYSPAQRVEYLLKAWAEKKDPMGFSYDTRCFDSTVTERDIRTEESIYQACSLPEEARTAIHSLTERLYVGGPMFNSKGQTCGYRRCRASGVLTTSMGNTITCYVKALAACKAAGIVAPTMLVCGDDLVVISESQGTEEDERNLRAFTEAMTRYSAPPGDPPRPEYDLELITSCSSNVSVALGPRGRRRYYLTRDPTTPLARAAWETVRHSPINSWLGNIIQYAPTIWVRMVLMTHFFSILMVQDTLDQNLNFEMYGSVYSVNPLDLPAIIERLHGLDAFSMHTYSHHELTRVASALRKLGAPPLRVWKSRARAVRASLISRGGKAAVCGRYLFNWAVKTKLKLTPLPEARLLDLSSWFTVGAGGGDIFHSVSRARPRSLLFGLLLLFVGVGLFLLPAR.

Ser-2 bears the N-acetylserine; by host mark. Residues 2-23 are interaction with STAT1; it reads STNPKPQRKTKRNTNRRPEDVK. Residues 2-58 form an interaction with EIF2AK2/PKR region; that stretch reads STNPKPQRKTKRNTNRRPEDVKFPGGGQIVGGVYLLPRRGPRLGVRTTRKTSERSQP. The interaction with DDX3X stretch occupies residues 2–59; it reads STNPKPQRKTKRNTNRRPEDVKFPGGGQIVGGVYLLPRRGPRLGVRTTRKTSERSQPR. The segment at 2–75 is disordered; it reads STNPKPQRKT…PKDRRSTGKA (74 aa). Over 2-168 the chain is Cytoplasmic; it reads STNPKPQRKT…EDGVNYATGN (167 aa). 2 consecutive short sequence motifs (nuclear localization signal) follow at residues 5 to 13 and 38 to 43; these read PKPQRKTKR and PRRGPR. Over residues 7-16 the composition is skewed to basic residues; sequence PQRKTKRNTN. Over residues 32–47 the composition is skewed to low complexity; it reads GGVYLLPRRGPRLGVR. Ser-53 carries the post-translational modification Phosphoserine; by host. Short sequence motifs (nuclear localization signal) lie at residues 58-64 and 66-71; these read PRGRRQP and PKDRRS. Ser-99 is modified (phosphoserine; by host). An important for endoplasmic reticulum and mitochondrial localization region spans residues 112-152; sequence PRHRSRNVGKVIDTLTCGFADLMGYIPVVGAPLSGAARAVA. Ser-116 bears the Phosphoserine; by host PKA mark. Residues 122 to 173 form an interaction with APOA2 region; sequence VIDTLTCGFADLMGYIPVVGAPLSGAARAVAHGVRVLEDGVNYATGNLPGFP. Positions 164–167 are important for lipid droplets localization; sequence YATG. The chain crosses the membrane as a helical span at residues 169 to 189; it reads LPGFPFSIFLLALLSCITVPV. Positions 178–191 are cleaved as a propeptide — ER anchor for the core protein, removed in mature form by host signal peptidase; it reads LLALLSCITVPVSA. The Lumenal segment spans residues 190 to 358; the sequence is SAAQVKNTSS…SGAHWGVMFG (169 aa). Asn-196, Asn-209, and Asn-234 each carry an N-linked (GlcNAc...) asparagine; by host glycan. Residues 265-296 form an important for fusion region; that stretch reads VVMSATFCSALYVGDLCGGVMLAAQVFIVSPQ. Asn-305 carries N-linked (GlcNAc...) asparagine; by host glycosylation. Residues 359-379 form a helical membrane-spanning segment; it reads LAYFSMQGAWAKVIVILLLAA. Residues 380–729 are Lumenal-facing; the sequence is GVDAGTTTVG…WEWVVLLFLL (350 aa). An HVR1 region spans residues 385–411; it reads TTTVGGAVARSTNVIAGVFSHGPQQNI. Residues Asn-417, Asn-423, Asn-430, and Asn-448 are each glycosylated (N-linked (GlcNAc...) (high mannose) asparagine; by host). Disulfide bonds link Cys-429–Cys-554, Cys-452–Cys-459, Cys-488–Cys-496, and Cys-505–Cys-510. Asn-477 is a glycosylation site (N-linked (GlcNAc...) (high mannose) asparagine; by host). The segment at 484 to 496 is CD81-binding 1; it reads MRPYCWHYPPKPC. A CD81-binding 2 region spans residues 524 to 555; the sequence is RGVPTYTWGENETDVFLLNSTRPPQGSWFGCT. N-linked (GlcNAc...) (high mannose) asparagine; by host glycans are attached at residues Asn-534, Asn-542, and Asn-558. The cysteines at positions 566 and 571 are disulfide-linked. N-linked (GlcNAc...) (high mannose) asparagine; by host glycosylation occurs at Asn-578. Cystine bridges form between Cys-585/Cys-589, Cys-601/Cys-624, and Cys-611/Cys-648. Asn-627 and Asn-649 each carry an N-linked (GlcNAc...) (high mannose) asparagine; by host glycan. Cys-656 and Cys-681 form a disulfide bridge. The tract at residues 664 to 675 is EIF2AK2/eIF2-alpha phosphorylation homology domain (PePHD); it reads SQLSPLLHSTTE. Residues 730-750 traverse the membrane as a helical segment; that stretch reads LADARVCACLWMLILLGQAEA. Over 751-761 the chain is Lumenal; the sequence is ALEKLVVLHAA. Residues 762 to 782 traverse the membrane as a helical segment; the sequence is SAANCHGLLYFAIFFVAAWHI. Residues 783-785 are Cytoplasmic-facing; that stretch reads RGR. The chain crosses the membrane as a helical span at residues 786–807; that stretch reads VVPLTTYCLTGLWPFCLLLMAL. The Lumenal segment spans residues 808–817; that stretch reads PRQAYAYDAP. Residues 818–838 traverse the membrane as a helical segment; it reads VHGQIGVGLLILITLFTLTPG. Residues 839 to 842 lie on the Cytoplasmic side of the membrane; the sequence is YKTL. Residues 843–863 form a helical membrane-spanning segment; sequence LGQCLWWLCYLLTLGEAMIQE. At 864 to 885 the chain is on the lumenal side; sequence WVPPMQVRGGRDGIAWAVTIFC. Residues 886–906 traverse the membrane as a helical segment; that stretch reads PGVVFDITKWLLALLGPAYLL. The Peptidase C18 domain occupies 907 to 1030; sequence RAALTHVPYF…GYTSKGWKLL (124 aa). The Cytoplasmic portion of the chain corresponds to 907-1661; sequence RAALTHVPYF…CMQADLEVMT (755 aa). The tract at residues 908 to 1210 is protease NS2-3; it reads AALTHVPYFV…PVETLDVVTR (303 aa). The S-palmitoyl cysteine; by host moiety is linked to residue Cys-926. Residues 933–953 are interaction with human SCPS1; it reads AGGRYVQVALLALGRWTGTYI. Residues His-956, Glu-976, and Cys-997 each act as for protease NS2 activity; shared with dimeric partner in the active site. The Peptidase S29 domain occupies 1031-1212; sequence APITAYAQQT…ETLDVVTRSP (182 aa). Active-site charge relay system; for serine protease NS3 activity residues include His-1087 and Asp-1111. 2 residues coordinate Zn(2+): Cys-1127 and Cys-1129. Residue Ser-1169 is the Charge relay system; for serine protease NS3 activity of the active site. Positions 1175 and 1179 each coordinate Zn(2+). In terms of domain architecture, Helicase ATP-binding spans 1221-1373; it reads PAVPQTYQVG…PDIEEVGLGR (153 aa). Residue 1234–1241 coordinates ATP; that stretch reads APTGSGKS. The Mg(2+) site is built by Ser-1241 and Glu-1321. Positions 1320 to 1323 match the DECH box motif; the sequence is DECH. A disordered region spans residues 1481-1501; sequence VPQDAVSRSQRRGRTGRGRQG. An RNA-binding region spans residues 1490–1501; it reads QRRGRTGRGRQG. Residues 1662 to 1682 form a helical membrane-spanning segment; it reads STWVLAGGVLAAVAAYCLATG. Positions 1683–1694 are NS3-binding; that stretch reads CVSIIGRLHVNQ. The Cytoplasmic portion of the chain corresponds to 1683 to 1809; that stretch reads CVSIIGRLHV…ALTSPLSTST (127 aa). The chain crosses the membrane as a helical span at residues 1810–1830; the sequence is TILLNIMGGWLASQIAPPAGA. Residues 1831-1832 are Lumenal-facing; the sequence is TG. The chain crosses the membrane as a helical span at residues 1833–1853; sequence FVVSGLVGAAVGSIGLGKVLV. The segment at 1837 to 1865 is glycine zipper; it reads GLVGAAVGSIGLGKVLVDILAGYGAGISG. Residue Asp-1854 is a topological domain, cytoplasmic. Residues 1855–1875 traverse the membrane as a helical segment; sequence ILAGYGAGISGALVAFKIMSG. Over 1876 to 1885 the chain is Lumenal; sequence EKPSMEDVIN. Residues 1886-1906 traverse the membrane as a helical segment; that stretch reads LLPGILSPGALVVGVICAAIL. The Cytoplasmic portion of the chain corresponds to 1907-1976; the sequence is RRHVGPGEGA…WITEDCPIPC (70 aa). Cys-1972 carries the S-palmitoyl cysteine; by host lipid modification. Cys-1976 is lipidated: S-palmitoyl cysteine; by host; partial. An intramembrane segment occupies 1977 to 2007; it reads SGSWLRDVWDWVCTILTDFKNWLTSKLFPKL. Positions 1982–2002 are membrane-binding; sequence RDVWDWVCTILTDFKNWLTSK. Residues 2008–3012 lie on the Cytoplasmic side of the membrane; it reads PGLPFISCQK…FHSVSRARPR (1005 aa). The interval 2009-2225 is D1; RNA-binding; that stretch reads GLPFISCQKG…RATCTTHSNT (217 aa). Positions 2015, 2033, 2035, and 2056 each coordinate Zn(2+). Tyr-2069 is modified (phosphotyrosine; by host). The segment at 2124-2212 is FKBP8-binding; the sequence is EFFSWVDGVQ…ASSSVSQLSA (89 aa). Positions 2124–2332 are transcriptional activation; sequence EFFSWVDGVQ…PTPPPRRRRT (209 aa). Residues 2139–2143 form an interaction with non-structural protein 4A region; that stretch reads PTPKP. Residues 2192–2213 form a disordered region; that stretch reads RRLARGSPPSEASSSVSQLSAP. Low complexity predominate over residues 2196 to 2213; that stretch reads RGSPPSEASSSVSQLSAP. Ser-2198 is modified (phosphoserine; by host; in p56). Phosphoserine; by host; in p58 is present on Ser-2201. The residue at position 2205 (Ser-2205) is a Phosphoserine; by host; in p56 and p58, regulates intracellular NS5A distribution. A phosphoserine; by host; in p58 mark is found at Ser-2208, Ser-2211, and Ser-2214. Positions 2210 to 2249 are ISDR; sequence LSAPSLRATCTTHSNTYDVDMVDANLLMEGGVAQTEPESR. Residues 2214–2275 form an interaction with EIF2AK2/PKR region; the sequence is SLRATCTTHS…LEPSIPSECM (62 aa). The tract at residues 2227 to 2315 is D2; that stretch reads DVDMVDANLL…YQPPTVAGCA (89 aa). The interval 2228–2315 is disordered; that stretch reads VDMVDANLLM…YQPPTVAGCA (88 aa). Residues 2249-2306 are NS4B-binding; sequence RVPVLDFLEPMAEEESDLEPSIPSECMLPRSGFPRALPAWARPDYNPPLVESWRRPDY. The interval 2281–2297 is interaction with human PPIA/CYPA; the sequence is FPRALPAWARPDYNPPL. Positions 2316–2326 are enriched in pro residues; that stretch reads LPPPKKAPTPP. The short motif at 2322–2325 is the SH3-binding element; sequence APTP. Thr-2324 bears the Phosphothreonine; by host mark. The Nuclear localization signal motif lies at 2326–2334; the sequence is PPRRRRTVG. Residues 2329–2442 are D3; it reads RRRTVGLSES…SEEDDTTVCC (114 aa). Positions 2336–2447 are interaction with host IFI27; it reads SESTISEALQ…TTVCCSMSYS (112 aa). Residue Lys-2350 forms a Glycyl lysine isopeptide (Lys-Gly) (interchain with G-Cter in ubiquitin) linkage. The segment at 2352–2432 is disordered; sequence FGQPPSSGDA…GSGSGSWSTC (81 aa). The segment covering 2355–2379 has biased composition (low complexity); the sequence is PPSSGDAGSSTGAGAAESGGPTSPG. The tract at residues 2358–2381 is V3; sequence SGDAGSSTGAGAAESGGPTSPGEP. The segment at 2371–2439 is interaction with host VAPB; it reads ESGGPTSPGE…STCSEEDDTT (69 aa). Residues 2398–2408 show a composition bias toward acidic residues; that stretch reads EPGDPDLESDQ. The span at 2417–2426 shows a compositional bias: gly residues; the sequence is GGGVAPGSGS. The region spanning 2656-2774 is the RdRp catalytic domain; sequence PMGFSYDTRC…ISESQGTEED (119 aa). Positions 2662, 2760, and 2761 each coordinate Mg(2+). The helical transmembrane segment at 3013 to 3033 threads the bilayer; the sequence is SLLFGLLLLFVGVGLFLLPAR.

The protein belongs to the hepacivirus polyprotein family. As to quaternary structure, homooligomer. Interacts with E1 (via C-terminus). Interacts with the non-structural protein 5A. Interacts (via N-terminus) with host STAT1 (via SH2 domain); this interaction results in decreased STAT1 phosphorylation and ubiquitin-mediated proteasome-dependent STAT1 degradation, leading to decreased IFN-stimulated gene transcription. Interacts with host STAT3; this interaction constitutively activates STAT3. Interacts with host LTBR receptor. Interacts with host TNFRSF1A receptor and possibly induces apoptosis. Interacts with host HNRPK. Interacts with host YWHAE. Interacts with host UBE3A/E6AP. Interacts with host DDX3X. Interacts with host APOA2. Interacts with host RXRA protein. Interacts with host SP110 isoform 3/Sp110b; this interaction sequesters the transcriptional corepressor SP110 away from the nucleus. Interacts with host CREB3 nuclear transcription protein; this interaction triggers cell transformation. Interacts with host ACY3. Interacts with host C1QR1. Interacts with host RBM24; this interaction, which enhances the interaction of the mature core protein with 5'-UTR, may inhibit viral translation and favor replication. Interacts (via N-terminus) with host EIF2AK2/PKR (via N-terminus); this interaction induces the autophosphorylation of EIF2AK2. Part of the viral assembly initiation complex composed of NS2, E1, E2, NS3, NS4A, NS5A and the mature core protein. Forms a heterodimer with envelope glycoprotein E2. Interacts with mature core protein. Interacts with protease NS2. The heterodimer E1/E2 interacts with host CLDN1; this interaction plays a role in viral entry into host cell. Interacts with host SPSB2 (via C-terminus). Part of the viral assembly initiation complex composed of NS2, E1, E2, NS3, NS4A, NS5A and the mature core protein. In terms of assembly, forms a heterodimer with envelope glycoprotein E1. Interacts with host CD81 and SCARB1 receptors; these interactions play a role in viral entry into host cell. Interacts with host EIF2AK2/PKR; this interaction inhibits EIF2AK2 and probably allows the virus to evade the innate immune response. Interacts with host CD209/DC-SIGN and CLEC4M/DC-SIGNR. Interact with host SPCS1; this interaction is essential for viral particle assembly. Interacts with protease NS2. The heterodimer E1/E2 interacts with host CLDN1; this interaction plays a role in viral entry into host cell. Part of the viral assembly initiation complex composed of NS2, E1, E2, NS3, NS4A, NS5A and the mature core protein. Interacts with host SLC3A2/4F2hc; the interaction may facilitate viral entry into host cell. As to quaternary structure, homohexamer. Homoheptamer. Interacts with protease NS2. Homodimer. Interacts with host SPCS1; this interaction is essential for viral particle assembly. Interacts with envelope glycoprotein E1. Interacts with envelope glycoprotein E2. Interacts with viroporin p7. Interacts with serine protease/helicase NS3. Part of the replication complex composed of NS2, NS3, NS4A, NS4B, NS5A and the RNA-directed RNA polymerase embedded in an ER-derived membranous web. Part of the viral assembly initiation complex composed of NS2, E1, E2, NS3, NS4A, NS5A and the mature core protein. Interacts with host NEURL3; this interaction prevents E1 binding to glycoprotein E2. In terms of assembly, interacts with protease NS2. Interacts with non-structural protein 4A; this interaction stabilizes the folding of NS3 serine protease. NS3-NS4A interaction is essential for NS3 activation and allows membrane anchorage of the latter. NS3/NS4A complex also prevents phosphorylation of host IRF3, thus preventing the establishment of dsRNA induced antiviral state. Interacts with host MAVS; this interaction leads to the cleavage and inhibition of host MAVS. Interacts with host TICAM1; this interaction leads to the cleavage and inhibition of host TICAM1. Interacts with host TANK-binding kinase/TBK1; this interaction results in the inhibition of the association between TBK1 and IRF3, which leads to the inhibition of IRF3 activation. Interacts with host RBM24. Part of the replication complex composed of NS2, NS3, NS4A, NS4B, NS5A and the RNA-directed RNA polymerase embedded in an ER-derived membranous web. Part of the viral assembly initiation complex composed of NS2, E1, E2, NS3, NS4A, NS5A and the mature core protein. As to quaternary structure, interacts with NS3 serine protease; this interaction stabilizes the folding of NS3 serine protease. NS3-NS4A interaction is essential for NS3 activation and allows membrane anchorage of the latter. Interacts with non-structural protein 5A (via N-terminus). Part of the replication complex composed of NS2, NS3, NS4A, NS4B, NS5A and the RNA-directed RNA polymerase embedded in an ER-derived membranous web. Part of the viral assembly initiation complex composed of NS2, E1, E2, NS3, NS4A, NS5A and the mature core protein. Homomultimer. Interacts with non-structural protein NS5A. Interacts with host PLA2G4C; this interaction likely initiates the recruitment of replication complexes to lipid droplets. Interacts with host STING; this interaction disrupts the interaction between STING and TBK1 thereby suppressing the interferon signaling. Part of the replication complex composed of NS2, NS3, NS4A, NS4B, NS5A and the RNA-directed RNA polymerase embedded in an ER-derived membranous web. In terms of assembly, monomer. Homodimer; dimerization is required for RNA-binding. Interacts with the mature core protein. Interacts (via N-terminus) with non-structural protein 4A. Interacts with non-structural protein 4B. Interacts (via region D2) with RNA-directed RNA polymerase. Part of the viral assembly initiation complex composed of NS2, E1, E2, NS3, NS4A, NS5A and the mature core protein. Part of the replication complex composed of NS2, NS3, NS4A, NS4B, NS5A and the RNA-directed RNA polymerase embedded in an ER-derived membranous web. Interacts with host GRB2. Interacts with host BIN1. Interacts with host PIK3R1. Interacts with host SRCAP. Interacts with host FKBP8. Interacts (via C-terminus) with host VAPB (via MSP domain). Interacts with host EIF2AK2/PKR; this interaction leads to disruption of EIF2AK2 dimerization by NS5A and probably allows the virus to evade the innate immune response. Interacts (via N-terminus) with host PACSIN2 (via N-terminus); this interaction attenuates protein kinase C alpha-mediated phosphorylation of PACSIN2 by disrupting the interaction between PACSIN2 and PRKCA. Interacts (via N-terminus) with host SRC kinase (via SH2 domain). Interacts with most Src-family kinases. Interacts with host IFI27 and SKP2; promotes the ubiquitin-mediated proteasomal degradation of NS5A. Interacts with host GPS2. Interacts with host TNFRSF21; this interaction allows the modulation by the virus of JNK, p38 MAPK, STAT3, and Akt signaling pathways in a DR6-dependent manner. Interacts (via N-terminus) with host CIDEB (via N-terminus); this interaction seems to regulate the association of HCV particles with APOE. Interacts with host CHKA/Choline Kinase-alpha; CHKA bridges host PI4KA and NS5A and potentiates NS5A-stimulated PI4KA activity, which then facilitates the targeting of the ternary complex to the ER for viral replication. Interacts with host SPSB2 (via C-terminus); this interaction targets NS5A for ubiquitination and degradation. Interacts with host RAB18; this interaction may promote the association of NS5A and other replicase components with lipid droplets. Interacts (via region D2) with host PPIA/CYPA; the interaction stimulates RNA-binding ability of NS5A and is dependent on the peptidyl-prolyl cis-trans isomerase activity of PPIA/CYPA. Interacts with host TRIM14; this interaction induces the degradation of NS5A. As to quaternary structure, homooligomer. Interacts with non-structural protein 5A. Interacts with host VAPB. Interacts with host PRK2/PKN2. Interacts with host HNRNPA1 and SEPT6; these interactions facilitate the viral replication. Part of the replication complex composed of NS2, NS3, NS4A, NS4B, NS5A and the RNA-directed RNA polymerase embedded in an ER-derived membranous web. It depends on Zn(2+) as a cofactor. Mg(2+) is required as a cofactor. In terms of processing, specific enzymatic cleavages in vivo yield mature proteins. The structural proteins, core, E1, E2 and p7 are produced by proteolytic processing by host signal peptidases. The core protein is synthesized as a 23 kDa precursor which is retained in the ER membrane through the hydrophobic signal peptide. Cleavage by the signal peptidase releases the 21 kDa mature core protein. The cleavage of the core protein precursor occurs between aminoacids 176 and 188 but the exact cleavage site is not known. Some degraded forms of the core protein appear as well during the course of infection. The other proteins (p7, NS2, NS3, NS4A, NS4B, NS5A and NS5B) are cleaved by the viral proteases. Autoprocessing between NS2 and NS3 is mediated by the NS2 cysteine protease catalytic domain and regulated by the NS3 N-terminal domain. Phosphorylated by host PKC and PKA. Post-translationally, ubiquitinated; mediated by UBE3A and leading to core protein subsequent proteasomal degradation. In terms of processing, highly N-glycosylated. Palmitoylation is required for NS2/3 autoprocessing and E2 recruitment to membranes. Post-translationally, palmitoylated. This modification may play a role in its polymerization or in protein-protein interactions. In terms of processing, cleaved by host caspases which arec probably activated by the viral infection. Ubiquitinated. Ubiquitination, most probably at Lys-2350, mediated by host IFI27 and SKP2 leads to proteasomal degradation, restricting viral infection. Post-translationally, phosphorylated on serines in a basal form termed p56. p58 is a hyperphosphorylated form of p56. p56 and p58 coexist in the cell in roughly equivalent amounts. Hyperphosphorylation is dependent on the presence of NS4A. Host CSNK1A1/CKI-alpha, PI4KA or RPS6KB1 kinases may be responsible for NS5A phosphorylation. Phosphorylated NS5A is involved in viral replication. In terms of processing, tyrosine phosphorylation is essential for the interaction with host SRC. The N-terminus is phosphorylated by host PRK2/PKN2.

Its subcellular location is the host endoplasmic reticulum membrane. The protein resides in the host mitochondrion membrane. It is found in the virion. The protein localises to the host cytoplasm. It localises to the host nucleus. Its subcellular location is the host lipid droplet. The protein resides in the virion membrane. It is found in the host mitochondrion. The protein localises to the host cell membrane. It localises to the host perinuclear region. It carries out the reaction Hydrolysis of four peptide bonds in the viral precursor polyprotein, commonly with Asp or Glu in the P6 position, Cys or Thr in P1 and Ser or Ala in P1'.. The catalysed reaction is a ribonucleoside 5'-triphosphate + H2O = a ribonucleoside 5'-diphosphate + phosphate + H(+). The enzyme catalyses ATP + H2O = ADP + phosphate + H(+). It catalyses the reaction RNA(n) + a ribonucleoside 5'-triphosphate = RNA(n+1) + diphosphate. Inhibited by the antiviral drug hexamethylene amiloride. Inhibition by amantadine appears to be genotype-dependent. Also inhibited by long-alkyl-chain iminosugar derivatives. With respect to regulation, activity is up-regulated by PRK2/PKN2-mediated phosphorylation. In terms of biological role, packages viral RNA to form a viral nucleocapsid, and promotes virion budding. Participates in the viral particle production as a result of its interaction with the non-structural protein 5A. Binds RNA and may function as a RNA chaperone to induce the RNA structural rearrangements taking place during virus replication. Modulates viral translation initiation by interacting with viral IRES and 40S ribosomal subunit. Affects various cell signaling pathways, host immunity and lipid metabolism. Prevents the establishment of cellular antiviral state by blocking the interferon-alpha/beta (IFN-alpha/beta) and IFN-gamma signaling pathways and by blocking the formation of phosphorylated STAT1 and promoting ubiquitin-mediated proteasome-dependent degradation of STAT1. Activates STAT3 leading to cellular transformation. Regulates the activity of cellular genes, including c-myc and c-fos. May repress the promoter of p53, and sequester CREB3 and SP110 isoform 3/Sp110b in the cytoplasm. Represses cell cycle negative regulating factor CDKN1A, thereby interrupting an important check point of normal cell cycle regulation. Targets transcription factors involved in the regulation of inflammatory responses and in the immune response: suppresses NF-kappa-B activation, and activates AP-1. Binds to dendritic cells (DCs) via C1QR1, resulting in down-regulation of T-lymphocytes proliferation. Alters lipid metabolism by interacting with hepatocellular proteins involved in lipid accumulation and storage. Induces up-regulation of FAS promoter activity, and thereby contributes to the increased triglyceride accumulation in hepatocytes (steatosis). Forms a heterodimer with envelope glycoprotein E2, which mediates virus attachment to the host cell, virion internalization through clathrin-dependent endocytosis and fusion with host membrane. Fusion with the host cell is most likely mediated by both E1 and E2, through conformational rearrangements of the heterodimer required for fusion rather than a classical class II fusion mechanism. E1/E2 heterodimer binds host apolipoproteins such as APOB and APOE thereby forming a lipo-viro-particle (LVP). APOE associated to the LVP allows the initial virus attachment to cell surface receptors such as the heparan sulfate proteoglycans (HSPGs), syndecan-1 (SDC1), syndecan-1 (SDC2), the low-density lipoprotein receptor (LDLR) and scavenger receptor class B type I (SCARB1). The cholesterol transfer activity of SCARB1 allows E2 exposure and binding of E2 to SCARB1 and the tetraspanin CD81. E1/E2 heterodimer binding on CD81 activates the epithelial growth factor receptor (EGFR) signaling pathway. Diffusion of the complex E1-E2-EGFR-SCARB1-CD81 to the cell lateral membrane allows further interaction with Claudin 1 (CLDN1) and occludin (OCLN) to finally trigger HCV entry. Functionally, forms a heterodimer with envelope glycoprotein E1, which mediates virus attachment to the host cell, virion internalization through clathrin-dependent endocytosis and fusion with host membrane. Fusion with the host cell is most likely mediated by both E1 and E2, through conformational rearrangements of the heterodimer required for fusion rather than a classical class II fusion mechanism. The interaction between envelope glycoprotein E2 and host apolipoprotein E/APOE allows the proper assembly, maturation and infectivity of the viral particles. This interaction is probably promoted via the up-regulation of cellular autophagy by the virus. E1/E2 heterodimer binds host apolipoproteins such as APOB and APOE thereby forming a lipo-viro-particle (LVP). APOE associated to the LVP allows the initial virus attachment to cell surface receptors such as the heparan sulfate proteoglycans (HSPGs), syndecan-1 (SDC1), syndecan-1 (SDC2), the low-density lipoprotein receptor (LDLR) and scavenger receptor class B type I (SCARB1). The cholesterol transfer activity of SCARB1 allows E2 exposure and binding of E2 to SCARB1 and the tetraspanin CD81. E1/E2 heterodimer binding on CD81 activates the epithelial growth factor receptor (EGFR) signaling pathway. Diffusion of the complex E1-E2-EGFR-SCARB1-CD81 to the cell lateral membrane allows further interaction with Claudin 1 (CLDN1) and occludin (OCLN) to finally trigger HCV entry. Inhibits host EIF2AK2/PKR activation, preventing the establishment of an antiviral state. Viral ligand for CD209/DC-SIGN and CLEC4M/DC-SIGNR, which are respectively found on dendritic cells (DCs), and on liver sinusoidal endothelial cells and macrophage-like cells of lymph node sinuses. These interactions allow the capture of circulating HCV particles by these cells and subsequent facilitated transmission to permissive cells such as hepatocytes and lymphocyte subpopulations. The interaction between E2 and host amino acid transporter complex formed by SLC3A2 and SLC7A5/LAT1 may facilitate viral entry into host cell. Its function is as follows. Ion channel protein that acts as a viroporin and plays an essential role in the assembly, envelopment and secretion of viral particles. Regulates the host cell secretory pathway, which induces the intracellular retention of viral glycoproteins and favors assembly of viral particles. Creates a pore in acidic organelles and releases Ca(2+) and H(+) in the cytoplasm of infected cells, leading to a productive viral infection. High levels of cytoplasmic Ca(2+) may trigger membrane trafficking and transport of viral ER-associated proteins to viroplasms, sites of viral genome replication. This ionic imbalance induces the assembly of the inflammasome complex, which triggers the maturation of pro-IL-1beta into IL-1beta through the action of caspase-1. Targets also host mitochondria and induces mitochondrial depolarization. In addition of its role as a viroporin, acts as a lipid raft adhesion factor. In terms of biological role, cysteine protease required for the proteolytic auto-cleavage between the non-structural proteins NS2 and NS3. The N-terminus of NS3 is required for the function of NS2 protease (active region NS2-3). Promotes the initiation of viral particle assembly by mediating the interaction between structural and non-structural proteins. Displays three enzymatic activities: serine protease with a chymotrypsin-like fold, NTPase and RNA helicase. NS3 serine protease, in association with NS4A, is responsible for the cleavages of NS3-NS4A, NS4A-NS4B, NS4B-NS5A and NS5A-NS5B. The NS3/NS4A complex prevents phosphorylation of host IRF3, thus preventing the establishment of dsRNA induced antiviral state. The NS3/NS4A complex induces host amino acid transporter component SLC3A2, thus contributing to HCV propagation. NS3 RNA helicase binds to RNA and unwinds both dsDNA and dsRNA in the 3' to 5' direction, and likely resolves RNA complicated stable secondary structures in the template strand. Binds a single ATP and catalyzes the unzipping of a single base pair of dsRNA. Inhibits host antiviral proteins TBK1 and IRF3 thereby preventing the establishment of an antiviral state. Cleaves host MAVS/CARDIF thereby preventing the establishment of an antiviral state. Cleaves host TICAM1/TRIF, thereby disrupting TLR3 signaling and preventing the establishment of an antiviral state. Functionally, peptide cofactor which forms a non-covalent complex with the N-terminal of NS3 serine protease. The NS3/NS4A complex prevents phosphorylation of host IRF3, thus preventing the establishment of dsRNA induced antiviral state. The NS3/NS4A complex induces host amino acid transporter component SLC3A2, thus contributing to HCV propagation. Its function is as follows. Induces a specific membrane alteration that serves as a scaffold for the virus replication complex. This membrane alteration gives rise to the so-called ER-derived membranous web that contains the replication complex. NS4B self-interaction contributes to its function in membranous web formation. Promotes host TRIF protein degradation in a CASP8-dependent manner thereby inhibiting host TLR3-mediated interferon signaling. Disrupts the interaction between STING and TBK1 contributing to the inhibition of interferon signaling. In terms of biological role, phosphorylated protein that is indispensable for viral replication and assembly. Both hypo- and hyperphosphorylated states are required for the viral life cycle. The hyperphosphorylated form of NS5A is an inhibitor of viral replication. Involved in RNA-binding and especially in binding to the viral genome. Zinc is essential for RNA-binding. Participates in the viral particle production as a result of its interaction with the viral mature core protein. Its interaction with host VAPB may target the viral replication complex to vesicles. Down-regulates viral IRES translation initiation. Mediates interferon resistance, presumably by interacting with and inhibiting host EIF2AK2/PKR. Prevents BIN1-induced apoptosis. Acts as a transcriptional activator of some host genes important for viral replication when localized in the nucleus. Via the interaction with host PACSIN2, modulates lipid droplet formation in order to promote virion assembly. Modulates TNFRSF21/DR6 signaling pathway for viral propagation. RNA-dependent RNA polymerase that performs primer-template recognition and RNA synthesis during viral replication. Initiates RNA transcription/replication at a flavin adenine dinucleotide (FAD), resulting in a 5'- FAD cap on viral RNAs. In this way, recognition of viral 5' RNA by host pattern recognition receptors can be bypassed, thereby evading activation of antiviral pathways. This chain is Genome polyprotein, found in Homo sapiens (Human).